Consider the following 407-residue polypeptide: Probable 2,3-bisphosphoglycerate-independent phosphoglycerate mutase (407 aa).

The segment at 175 to 200 (GSDAINDTDPQQVGKEPLEPKGENPN) is disordered.

It belongs to the BPG-independent phosphoglycerate mutase family. A-PGAM subfamily.

The enzyme catalyses (2R)-2-phosphoglycerate = (2R)-3-phosphoglycerate. It functions in the pathway carbohydrate degradation; glycolysis; pyruvate from D-glyceraldehyde 3-phosphate: step 3/5. Its function is as follows. Catalyzes the interconversion of 2-phosphoglycerate and 3-phosphoglycerate. The protein is Probable 2,3-bisphosphoglycerate-independent phosphoglycerate mutase of Aquifex aeolicus (strain VF5).